A 255-amino-acid chain; its full sequence is Ribosomal RNA small subunit methyltransferase A (255 aa).

The S-adenosyl-L-methionine site is built by Asn-11, Leu-13, Gly-38, Glu-59, Asp-83, and Asn-101.

It belongs to the class I-like SAM-binding methyltransferase superfamily. rRNA adenine N(6)-methyltransferase family. RsmA subfamily.

Its subcellular location is the cytoplasm. The catalysed reaction is adenosine(1518)/adenosine(1519) in 16S rRNA + 4 S-adenosyl-L-methionine = N(6)-dimethyladenosine(1518)/N(6)-dimethyladenosine(1519) in 16S rRNA + 4 S-adenosyl-L-homocysteine + 4 H(+). Its function is as follows. Specifically dimethylates two adjacent adenosines (A1518 and A1519) in the loop of a conserved hairpin near the 3'-end of 16S rRNA in the 30S particle. May play a critical role in biogenesis of 30S subunits. The protein is Ribosomal RNA small subunit methyltransferase A of Thiobacillus denitrificans (strain ATCC 25259 / T1).